The chain runs to 167 residues: Cell division protein SepF (167 aa).

Residues 25 to 64 (EEDVAPVNNSTFQEKKHKKRSAVQRKQKNSDQEGDSVVPL) form a disordered region. A compositionally biased stretch (basic residues) spans 39-51 (KKHKKRSAVQRKQ).

The protein belongs to the SepF family. As to quaternary structure, homodimer. Interacts with FtsZ.

Its subcellular location is the cytoplasm. Functionally, cell division protein that is part of the divisome complex and is recruited early to the Z-ring. Probably stimulates Z-ring formation, perhaps through the cross-linking of FtsZ protofilaments. Its function overlaps with FtsA. This chain is Cell division protein SepF, found in Natranaerobius thermophilus (strain ATCC BAA-1301 / DSM 18059 / JW/NM-WN-LF).